The following is a 348-amino-acid chain: Mitogen-activated protein kinase kinase 5 (348 aa).

2 disordered regions span residues 1–26 and 35–54; these read MKPIQSPSGVASPMKNRLRKRPDLSL and LAVPLPLPPPSSSSSAPASS. At serine 6 the chain carries Phosphoserine; by ASK7. The 256-residue stretch at 70–325 folds into the Protein kinase domain; sequence LERVNRIGSG…AQQLLQHPFI (256 aa). ATP-binding positions include 76 to 84 and lysine 99; that span reads IGSGAGGTV. Aspartate 187 acts as the Proton acceptor in catalysis. Threonine 215 bears the Phosphothreonine mark. Serine 221 is subject to Phosphoserine; by ASK7. Serine 221 is modified (phosphoserine). Threonine 225 bears the Phosphothreonine; by ASK7 mark. Arginine 313 carries the post-translational modification ADP-ribosylarginine; by HopF2.

Belongs to the protein kinase superfamily. STE Ser/Thr protein kinase family. MAP kinase kinase subfamily. In terms of assembly, interacts with P.syringae type III effector HopF2. Interacts with BZR1. Interacts with MPK6 and MPK3. Interacts with RACK1A, RACK1B and RACK1C. Interacts with MAPKKK5 mainly in the cytosol. Binds to BASL. Interacts with MAPKKK20. Phosphorylation at Thr-215 and Ser-221 by MAP kinase kinase kinases positively regulates kinase activity. Phosphorylated by MAPKKK5 and MAPKKK20 in response to abscisic acid (ABA). In terms of processing, ADP-ribosylation at Arg-313 by P.syringae type III effector HopF2 reduces the ability of the protein to phosphorylate downstream MPK6. In terms of tissue distribution, expressed higher in stems and leaves than in flowers and roots.

The catalysed reaction is L-seryl-[protein] + ATP = O-phospho-L-seryl-[protein] + ADP + H(+). It catalyses the reaction L-threonyl-[protein] + ATP = O-phospho-L-threonyl-[protein] + ADP + H(+). The enzyme catalyses L-tyrosyl-[protein] + ATP = O-phospho-L-tyrosyl-[protein] + ADP + H(+). Activated through serine and threonine phosphorylation by MEKK1 and MAPKKK20 in response to abscisic acid (ABA). Inhibited through phosphorylation by GSK3/Shaggy-like kinase ASKs. Inhibited through ADP-Ribosylation by P.syringae HopF2. Activated after high light stress. Its function is as follows. Mitogen-activated protein kinase kinase (MAPKK) which regulates abscisic acid (ABA) responses in a MAPKKK20-MKK5-MPK6 cascade involved in root growth (e.g. root cell division and elongation) and stomatal response, probably via MAPK6 activation by protein phosphorylation. Involved in the second phase of hydrogen peroxide generation during hypersensitive response-like cell death. Involved in the innate immune MAP kinase signaling cascade (MEKK1, MKK4/MKK5 and MPK3/MPK6) downstream of bacterial flagellin receptor FLS2. Activates by phosphorylation the downstream MPK3 and MPK6. YDA-MKK4/MKK5-MPK3/MPK6 module regulates stomatal cell fate before the guard mother cell (GMC) is specified. This MAPK cascade also functions downstream of the ER receptor in regulating coordinated local cell proliferation, which shapes the morphology of plant organs. MKK4 and MKK5 participate in the regulation of floral organ abscission. Target of the Pseudomonas syringae type III effector HopF2, that inhibits the activation of the downstream MPK6 and PAMP-triggered immunity. Plays a critical role in high light stress tolerance by the mediation of the Cu/Zn SODs CSD1 and CSD2 gene expression. Phosphorylates BZR1 in vitro. The sequence is that of Mitogen-activated protein kinase kinase 5 from Arabidopsis thaliana (Mouse-ear cress).